The following is a 287-amino-acid chain: N-methyltransferase verN (287 aa).

This sequence belongs to the methyltransferase superfamily. LaeA methyltransferase family.

The protein operates within mycotoxin biosynthesis. Its function is as follows. N-methyltransferase; part of the gene cluster that mediates the biosynthesis of 11'-deoxyverticillin A, one of the dimeric epipolythiodioxopiperazines (ETPs) from the verticillin family that act as mycotoxins. 11'-deoxyverticillin A is required for normal conidiation. The nonribosomal peptide synthetase verP is speculated to be responsible for condensation of amino acids to form the carbon skeleton of verticillin, whereas the cluster-specific tailoring enzymes are involved in further modifications leading to the production of 11'-deoxyverticillin A. The protein is N-methyltransferase verN of Clonostachys rogersoniana.